We begin with the raw amino-acid sequence, 318 residues long: L-lactate dehydrogenase (318 aa).

Residues valine 15, aspartate 36, and lysine 41 each contribute to the NAD(+) site. A substrate-binding site is contributed by arginine 89. Residues serine 102, 119 to 121, and threonine 144 each bind NAD(+); that span reads ITN. 121–124 is a substrate binding site; the sequence is NPVD. Position 149–152 (149–152) interacts with substrate; it reads DSAR. The active-site Proton acceptor is histidine 176. Threonine 231 serves as a coordination point for substrate.

The protein belongs to the LDH/MDH superfamily. LDH family. In terms of assembly, homotetramer.

The protein resides in the cytoplasm. It catalyses the reaction (S)-lactate + NAD(+) = pyruvate + NADH + H(+). The protein operates within fermentation; pyruvate fermentation to lactate; (S)-lactate from pyruvate: step 1/1. In terms of biological role, catalyzes the conversion of lactate to pyruvate. This is L-lactate dehydrogenase from Fusobacterium nucleatum subsp. nucleatum (strain ATCC 25586 / DSM 15643 / BCRC 10681 / CIP 101130 / JCM 8532 / KCTC 2640 / LMG 13131 / VPI 4355).